The chain runs to 516 residues: Radial spoke head protein 3 homolog A (516 aa).

Disordered stretches follow at residues 1–45 (MAAT…GNPA), 120–139 (STLN…AEAS), and 190–233 (PTGQ…PVEG). The span at 12 to 25 (AKKRPLHQRARRPA) shows a compositional bias: basic residues. Residues 120 to 129 (STLNQASAMT) are compositionally biased toward polar residues. A compositionally biased stretch (basic residues) spans 208–217 (QARRRALARK). Basic and acidic residues predominate over residues 218–233 (RAQEQLKPRTPEPVEG). T270 carries the post-translational modification Phosphothreonine; by MAPK1. Residues 333 to 369 (YEEIRNVELAEVQRLEEQERRHREEKERRKKQQWEIV) adopt a coiled-coil conformation. The disordered stretch occupies residues 459–516 (EAMPPGQKTNVINGPNTVTDPSVTTLHTQKPVLDRVSSQPAPSQERKPVEEGGHLMAE). The segment covering 465–486 (QKTNVINGPNTVTDPSVTTLHT) has biased composition (polar residues). Over residues 502-516 (QERKPVEEGGHLMAE) the composition is skewed to basic and acidic residues.

This sequence belongs to the flagellar radial spoke RSP3 family. As to quaternary structure, may be a component of axonemal radial spokes. Interacts with IQUB. Interacts with phosphorylated MAPK1. Interacts with MEK1. Interacts with PKA regulatory subunits PRKAR1A and PRKAR1B. Interacts with RSPH1. Interacts with RSPH4A. Interacts with RSPH6A. Interacts with RSPH9. Interacts with CFAP61. Interacts with LRRC23.

Its subcellular location is the cytoplasm. The protein resides in the cytoskeleton. It localises to the cilium axoneme. The protein localises to the flagellum axoneme. Its function is as follows. May function as part of axonemal radial spoke complexes that play an important part in the motility of sperm and cilia. Functions as a protein kinase A-anchoring protein that scaffolds the cAMP-dependent protein kinase holoenzyme. May serve as a point of convergence for MAPK and PKA signaling in cilia. This is Radial spoke head protein 3 homolog A (Rsph3a) from Mus musculus (Mouse).